Here is a 265-residue protein sequence, read N- to C-terminus: Protein IL-40 (265 aa).

A signal peptide spans 1-20 (MGLPGLFCLAVLAASSFSKA). Asn86 and Asn132 each carry an N-linked (GlcNAc...) asparagine glycan.

In terms of tissue distribution, expressed in fetal liver and bone marrow. Expressed in peripheral blood lymphocyte B cells.

The protein localises to the secreted. In terms of biological role, probable B cell-associated cytokine that plays a role in the regulation of humoral immune responses. Involved in lymphocyte B cell development and immunoglobulin/IgA production. This chain is Protein IL-40, found in Homo sapiens (Human).